The following is a 398-amino-acid chain: Enoate reductase 1 (398 aa).

FMN is bound by residues Thr37 and His191. Substrate contacts are provided by His191 and Asn194. Catalysis depends on Tyr196, which acts as the Proton donor. 2 residues coordinate FMN: Arg243 and Arg348. Tyr375 lines the substrate pocket.

The protein belongs to the NADH:flavin oxidoreductase/NADH oxidase family. In terms of assembly, homodimer or heterodimer. FMN serves as cofactor.

It catalyses the reaction butanoate + NAD(+) = (2E)-2-butenoate + NADH + H(+). Its function is as follows. Enoate reductase with broad substrate specificity for different alpha,beta-unsaturated carbonyl compounds. Prefers NADPH over NADH as cofactor. This chain is Enoate reductase 1 (KYE1), found in Kluyveromyces lactis (strain ATCC 8585 / CBS 2359 / DSM 70799 / NBRC 1267 / NRRL Y-1140 / WM37) (Yeast).